The chain runs to 54 residues: Lectin alpha chain (54 aa).

Belongs to the leguminous lectin family. As to quaternary structure, tetramer of two alpha and two beta chains.

The sequence is that of Lectin alpha chain from Lathyrus tingitanus (Tangier pea).